The primary structure comprises 159 residues: Ribosomal RNA large subunit methyltransferase H (159 aa).

Residues L76, G108, and 127–132 (FSKMTL) each bind S-adenosyl-L-methionine.

The protein belongs to the RNA methyltransferase RlmH family. Homodimer.

The protein localises to the cytoplasm. The catalysed reaction is pseudouridine(1915) in 23S rRNA + S-adenosyl-L-methionine = N(3)-methylpseudouridine(1915) in 23S rRNA + S-adenosyl-L-homocysteine + H(+). In terms of biological role, specifically methylates the pseudouridine at position 1915 (m3Psi1915) in 23S rRNA. In Bacillus anthracis (strain CDC 684 / NRRL 3495), this protein is Ribosomal RNA large subunit methyltransferase H.